Here is a 152-residue protein sequence, read N- to C-terminus: Immunity protein YobK (152 aa).

In terms of assembly, interacts with cognate toxin YobL but not with non-cognate putative toxin YeeF. The interaction inhibits the toxic activity of YobL.

Its subcellular location is the cytoplasm. Its function is as follows. Immunity component of one of 6 LXG toxin-immunity modules in this strain. They promote kin selection, mediate competition in biofilms, and drive spatial segregation of different strains, indicating that LXG toxins may help avoid warfare between strains in biofilms. Mediates intercellular competition during biofilm formation; disruption of the operon disadvantages the bacteria, but overexpression of the cognate immunity protein restores growth in competition with wild-type. In situ neutralizes the toxic effect of cognate toxin YobL. Neutralizes the toxic activity of cognate toxin YobL upon expression in E.coli. Does not have immunity protein activity on other LXG toxins. The chain is Immunity protein YobK (yobK) from Bacillus subtilis (strain 168).